The sequence spans 439 residues: Nitroalkane oxidase (439 aa).

FAD-binding positions include Leu131–Ser134, Thr139–Asn141, Trp169–Ser171, Arg304, His313–Gln314, Lys375–Met379, and Leu400–Gly404. Asp402 (proton acceptor) is an active-site residue.

It belongs to the acyl-CoA dehydrogenase family. Homotetramer. FAD serves as cofactor.

The enzyme catalyses a primary nitroalkane + O2 + H2O = an aldehyde + nitrite + H2O2 + H(+). It catalyses the reaction a secondary nitroalkane + O2 + H2O = a ketone + nitrite + H2O2 + H(+). Its activity is regulated as follows. Strongly inhibited by mercury chloride and KCN. Its function is as follows. Catalyzes the oxidative denitrification of neutral nitroalkanes, including 3-nitro-2-pentanol, 1-nitropropane, 2-nitropropane, nitroethane and nitrocyclohexane, and may thereby protect the organism against toxic compounds. Has no detectable acyl-CoA dehydrogenase activity. This is Nitroalkane oxidase from Fusarium oxysporum (Fusarium vascular wilt).